Reading from the N-terminus, the 380-residue chain is tRNA-specific 2-thiouridylase MnmA (380 aa).

ATP is bound by residues 9 to 16 and methionine 35; that span reads GVSGGVDS. The interaction with target base in tRNA stretch occupies residues 94–96; the sequence is NPD. The active-site Nucleophile is the cysteine 99. A disulfide bond links cysteine 99 and cysteine 195. Residue glycine 123 coordinates ATP. Residues 145–147 form an interaction with tRNA region; the sequence is KDQ. Cysteine 195 functions as the Cysteine persulfide intermediate in the catalytic mechanism. Positions 308 to 309 are interaction with tRNA; it reads RY.

This sequence belongs to the MnmA/TRMU family.

The protein localises to the cytoplasm. It carries out the reaction S-sulfanyl-L-cysteinyl-[protein] + uridine(34) in tRNA + AH2 + ATP = 2-thiouridine(34) in tRNA + L-cysteinyl-[protein] + A + AMP + diphosphate + H(+). Functionally, catalyzes the 2-thiolation of uridine at the wobble position (U34) of tRNA, leading to the formation of s(2)U34. The sequence is that of tRNA-specific 2-thiouridylase MnmA from Stenotrophomonas maltophilia (strain R551-3).